The primary structure comprises 282 residues: DNA processing protein DprA (282 aa).

This sequence belongs to the DprA/Smf family. Homodimer; forms tail-to-tail dimers, forms nucleoprotein complex (NPC) which requires at least 30 nucleotides (nt) of ssDNA becoming optimal with 50 nt. Interacts with RecA, forms mixed DprA-RecA-ssDNA filaments. Interacts with ComFA and ComFC.

It is found in the cytoplasm. Its function is as follows. Protein that helps load RecA onto ssDNA during transformation. Required for DNA transformation. Not required for DNA uptake but for a later stage of transformation. Thought to interact at the cell pole with newly imported transforming ssDNA which it binds cooperatively, protecting linear and circular ssDNA from nuclease action. Forms bridges between DNA segments. Favors the loading of RecA onto ssDNA and formation of RecA-DNA filaments, triggering RecA-catalysis of ATP-driven homologous DNA pairing. The sequence is that of DNA processing protein DprA from Streptococcus pneumoniae (strain ATCC BAA-255 / R6).